A 530-amino-acid polypeptide reads, in one-letter code: UDP-glucuronosyltransferase 2B15 (530 aa).

An N-terminal signal peptide occupies residues 1-23 (MSGKWISALLLLQISFCFKSGNC). A glycan (N-linked (GlcNAc...) asparagine) is linked at asparagine 316. A helical membrane pass occupies residues 494-510 (VIGFLLSCVAVTVVLAL).

This sequence belongs to the UDP-glycosyltransferase family. Post-translationally, N-glycosylated. As to expression, liver. Lower levels seen in the kidney and testis.

Its subcellular location is the endoplasmic reticulum membrane. It catalyses the reaction glucuronate acceptor + UDP-alpha-D-glucuronate = acceptor beta-D-glucuronoside + UDP + H(+). The enzyme catalyses 17alpha-estradiol + UDP-alpha-D-glucuronate = 17alpha-estradiol 3-O-(beta-D-glucuronate) + UDP + H(+). The catalysed reaction is 16alpha,17alpha-estriol + UDP-alpha-D-glucuronate = 16alpha,17alpha-estriol 3-O-(beta-D-glucuronate) + UDP + H(+). It carries out the reaction 17beta-hydroxy-5alpha-androstan-3-one + UDP-alpha-D-glucuronate = 5alpha-dihydrotestosterone 17-O-(beta-D-glucuronate) + UDP + H(+). Its function is as follows. UDP-glucuronosyltransferase (UGT) that catalyzes phase II biotransformation reactions in which lipophilic substrates are conjugated with glucuronic acid to increase the metabolite's water solubility, thereby facilitating excretion into either the urine or bile. Essential for the elimination and detoxification of drugs, xenobiotics and endogenous compounds. Catalyzes the glucuronidation of endogenous steroid hormones such as androgens (testosterone, androsterone) and estrogens (estradiol, epiestradiol, estriol, catechol estrogens). Displays glucuronidation activity toward several classes of xenoblotic substrates, including phenolic compounds (eugenol, 4-nitrophenol, 4-hydroxybiphenyl) and phenylpropanoids (naringenin, coumarins). Catalyzes the glucuronidation of monoterpenoid alcohols such as borneol, menthol and isomenthol, a class of natural compounds used in essential oils. This is UDP-glucuronosyltransferase 2B15 from Rattus norvegicus (Rat).